We begin with the raw amino-acid sequence, 342 residues long: Ribosomal RNA small subunit methyltransferase H (342 aa).

Residues G62–H64, D82, F108, D129, and Q136 contribute to the S-adenosyl-L-methionine site. Residues R280–P319 are disordered. Residues K297–G309 show a composition bias toward basic residues.

The protein belongs to the methyltransferase superfamily. RsmH family.

It is found in the cytoplasm. The enzyme catalyses cytidine(1402) in 16S rRNA + S-adenosyl-L-methionine = N(4)-methylcytidine(1402) in 16S rRNA + S-adenosyl-L-homocysteine + H(+). Functionally, specifically methylates the N4 position of cytidine in position 1402 (C1402) of 16S rRNA. In Psychrobacter cryohalolentis (strain ATCC BAA-1226 / DSM 17306 / VKM B-2378 / K5), this protein is Ribosomal RNA small subunit methyltransferase H.